The primary structure comprises 243 residues: Ras-related protein Rab-12 (243 aa).

N-acetylmethionine is present on Met1. The tract at residues 1-36 (MDPSAALHRRPAGGSLGAVSPALSGGQARRRKQPPR) is disordered. Phosphoserine is present on residues Ser15, Ser20, and Ser24. Positions 51, 52, 53, 54, 55, 72, and 73 each coordinate GTP. Thr55 is a Mg(2+) binding site. Short sequence motifs (switch) lie at residues 64-78 (DTFCEACKSTVGVDF) and 96-113 (DTAGQERFNSITSAYYRS). 2 residues coordinate Mg(2+): Thr73 and Asp96. GTP is bound at residue Gly99. The residue at position 105 (Ser105) is a Phosphoserine; by LRRK2. 6 residues coordinate GTP: Asn154, Lys155, Asp157, Ser185, Ala186, and Lys187. 2 S-geranylgeranyl cysteine lipidation sites follow: Cys242 and Cys243.

The protein belongs to the small GTPase superfamily. Rab family. In terms of assembly, interacts with RABIF and OPTN. Interacts with LRRK2; interaction facilitates phosphorylation of Ser-105. Interacts with GDI1, GDI2, CHM and CHML; these interactions are disrupted by phosphorylation on Ser-105. Interacts with RILPL1 and RILPL2; these interactions are dependent on phosphorylation of Ser-105. It depends on Mg(2+) as a cofactor. In terms of processing, phosphorylation of Ser-105 in the switch II region by LRRK2 prevents the association of RAB regulatory proteins, including CHM, CHML and RAB GDP dissociation inhibitors GDI1 and GDI2. Ubiquitously expressed.

The protein localises to the recycling endosome membrane. Its subcellular location is the lysosome membrane. It localises to the golgi apparatus membrane. The protein resides in the cytoplasmic vesicle. It is found in the autophagosome. The catalysed reaction is GTP + H2O = GDP + phosphate + H(+). Its activity is regulated as follows. Regulated by guanine nucleotide exchange factors (GEFs) including DENND3 which promote the exchange of bound GDP for free GTP. Regulated by GTPase activating proteins (GAPs) which increase the GTP hydrolysis activity. Inhibited by GDP dissociation inhibitors (GDIs). In terms of biological role, the small GTPases Rab are key regulators of intracellular membrane trafficking, from the formation of transport vesicles to their fusion with membranes. Rabs cycle between an inactive GDP-bound form and an active GTP-bound form that is able to recruit to membranes different set of downstream effectors directly responsible for vesicle formation, movement, tethering and fusion. RAB12 may play a role in protein transport from recycling endosomes to lysosomes regulating, for instance, the degradation of the transferrin receptor. Involved in autophagy. This Mus musculus (Mouse) protein is Ras-related protein Rab-12.